The sequence spans 172 residues: Small ribosomal subunit protein uS5 (172 aa).

The region spanning 17-80 (LREKMISVNR…EQARRNMFKV (64 aa)) is the S5 DRBM domain.

The protein belongs to the universal ribosomal protein uS5 family. As to quaternary structure, part of the 30S ribosomal subunit. Contacts proteins S4 and S8.

With S4 and S12 plays an important role in translational accuracy. In terms of biological role, located at the back of the 30S subunit body where it stabilizes the conformation of the head with respect to the body. This Paraburkholderia phymatum (strain DSM 17167 / CIP 108236 / LMG 21445 / STM815) (Burkholderia phymatum) protein is Small ribosomal subunit protein uS5.